The chain runs to 213 residues: Charged multivesicular body protein 2b (213 aa).

Position 2 is an N-acetylalanine (Ala2). Residues 25-55 (QRAIIRDRAALEKQEKQLELEIKKMAKIGNK) adopt a coiled-coil conformation. The segment covering 179–194 (AKAPSAARSLPSASTS) has biased composition (low complexity). The interval 179–199 (AKAPSAARSLPSASTSKATIS) is disordered. Ser199 is subject to Phosphoserine. The short motif at 201–211 (EEIERQLKALG) is the MIT-interacting motif element.

The protein belongs to the SNF7 family. Probable core component of the endosomal sorting required for transport complex III (ESCRT-III). ESCRT-III components are thought to multimerize to form a flat lattice on the perimeter membrane of the endosome. Several assembly forms of ESCRT-III may exist that interact and act sequentially. Interacts with CHMP2A. Interacts with VPS4A. Interacts with VPS4B; the interaction is direct. In brain, it is expressed in all neuronal populations with a relatively enhanced expression in the hippocampus, frontal and temporal lobes and in both granule and Purkinje cells of the cerebellum. Not expressed in astrocytes or oligodendrocytes.

It localises to the cytoplasm. It is found in the cytosol. Its subcellular location is the late endosome membrane. In terms of biological role, probable core component of the endosomal sorting required for transport complex III (ESCRT-III) which is involved in multivesicular bodies (MVBs) formation and sorting of endosomal cargo proteins into MVBs. MVBs contain intraluminal vesicles (ILVs) that are generated by invagination and scission from the limiting membrane of the endosome and mostly are delivered to lysosomes enabling degradation of membrane proteins, such as stimulated growth factor receptors, lysosomal enzymes and lipids. The MVB pathway appears to require the sequential function of ESCRT-O, -I,-II and -III complexes. ESCRT-III proteins mostly dissociate from the invaginating membrane before the ILV is released. The ESCRT machinery also functions in topologically equivalent membrane fission events, such as the terminal stages of cytokinesis. ESCRT-III proteins are believed to mediate the necessary vesicle extrusion and/or membrane fission activities, possibly in conjunction with the AAA ATPase VPS4. This chain is Charged multivesicular body protein 2b (Chmp2b), found in Mus musculus (Mouse).